The chain runs to 427 residues: Tyrosine--tRNA ligase (427 aa).

Tyr-33 provides a ligand contact to L-tyrosine. A 'HIGH' region motif is present at residues Pro-38–Asn-47. Residues Tyr-168 and Gln-172 each coordinate L-tyrosine. The 'KMSKS' region motif lies at Lys-228–Ser-232. Lys-231 is an ATP binding site. One can recognise an S4 RNA-binding domain in the interval Glu-358–Val-426.

The protein belongs to the class-I aminoacyl-tRNA synthetase family. TyrS type 1 subfamily. As to quaternary structure, homodimer.

It localises to the cytoplasm. It carries out the reaction tRNA(Tyr) + L-tyrosine + ATP = L-tyrosyl-tRNA(Tyr) + AMP + diphosphate + H(+). In terms of biological role, catalyzes the attachment of tyrosine to tRNA(Tyr) in a two-step reaction: tyrosine is first activated by ATP to form Tyr-AMP and then transferred to the acceptor end of tRNA(Tyr). This Amoebophilus asiaticus (strain 5a2) protein is Tyrosine--tRNA ligase.